A 55-amino-acid chain; its full sequence is uncharacterized protein (55 aa).

Positions 17–44 (QNVNIALTKKRLDTAQQNADQTLKMIQH) form a coiled coil.

This is an uncharacterized protein from Bacillus subtilis (strain 168).